The chain runs to 196 residues: uncharacterized protein (196 aa).

S-adenosyl-L-methionine-binding positions include 44–46 (TTA), Gly80, Val100, and 107–109 (PSL).

The protein belongs to the class IV-like SAM-binding methyltransferase superfamily. RNA methyltransferase TrmH family.

This is an uncharacterized protein from Serratia marcescens.